The following is a 209-amino-acid chain: Inorganic pyrophosphatase (209 aa).

Residues lysine 38, arginine 52, and tyrosine 64 each contribute to the substrate site. Residues aspartate 92, aspartate 97, and aspartate 130 each contribute to the Mg(2+) site. Tyrosine 167 contacts substrate.

The protein belongs to the PPase family. As to quaternary structure, homohexamer. Mg(2+) is required as a cofactor.

Its subcellular location is the cytoplasm. It carries out the reaction diphosphate + H2O = 2 phosphate + H(+). Catalyzes the hydrolysis of inorganic pyrophosphate (PPi) forming two phosphate ions. The protein is Inorganic pyrophosphatase of Chlamydia trachomatis serovar L2 (strain ATCC VR-902B / DSM 19102 / 434/Bu).